A 926-amino-acid chain; its full sequence is DNA mismatch repair protein MutS (926 aa).

A disordered region spans residues 16-40 (VASTPTRRGRPPGSSAARASNGAGS). Low complexity predominate over residues 26–40 (PPGSSAARASNGAGS). An ATP-binding site is contributed by 658 to 665 (GPNMAGKS).

This sequence belongs to the DNA mismatch repair MutS family.

Its function is as follows. This protein is involved in the repair of mismatches in DNA. It is possible that it carries out the mismatch recognition step. This protein has a weak ATPase activity. In Granulibacter bethesdensis (strain ATCC BAA-1260 / CGDNIH1), this protein is DNA mismatch repair protein MutS.